We begin with the raw amino-acid sequence, 509 residues long: MKKLIIRKTEEIENWRKDIDSEINFIPTMGNLHDGHIKLISTAKNDNSNINLVSIFINPLQFDNKLDLENYPKTIDNDINISFSNGADAIFIPSNEDIYPPNNNISFLKAPIELSSALCGLNRIGHFDGVCTVVYRLLNLIKPKNLYLGEKDWQQLLILKNLVLRKKLNIAIKSIPTQRDFDGIPLSSRNVHLSKNERKLISFFSRELLEAKKNFQKEKKINLKEIIKKLSEKKISIEYLEHLHPYTLQKAKIEDNISLLAGAIRCGETRLIDHVFLMKRRPIIAIDGPAGSGKSTVTKLIAKKLKLLYLDTGAMYRALSWLIIKENIDFKKENKLQNILKDISIVFKSNTSSHQDVYVNNYCVTEEIRSQKISSIVSKISSIKEVREFLVEEQRKIGESGGLVAEGRDIGTTVFPHAELKIFLTASIDERAKRRKSDKNSKDLQEIDLHKLKELIKQRDSEDSNRKISPLIKANDAIEIITDGYSINEVVDKIIDLYNDKIPKESEIK.

The tract at residues 1 to 275 (MKKLIIRKTE…CGETRLIDHV (275 aa)) is pantoate--beta-alanine ligase. Position 29–36 (29–36 (MGNLHDGH)) interacts with ATP. The active-site Proton donor is the His-36. Gln-61 serves as a coordination point for (R)-pantoate. Gln-61 serves as a coordination point for beta-alanine. 149–152 (GEKD) provides a ligand contact to ATP. Gln-155 contributes to the (R)-pantoate binding site. Residue 186–189 (LSSR) coordinates ATP. The cytidylate kinase stretch occupies residues 276 to 509 (FLMKRRPIIA…DKIPKESEIK (234 aa)).

The protein in the N-terminal section; belongs to the pantothenate synthetase family. In the C-terminal section; belongs to the cytidylate kinase family. Type 1 subfamily.

The protein resides in the cytoplasm. It catalyses the reaction (R)-pantoate + beta-alanine + ATP = (R)-pantothenate + AMP + diphosphate + H(+). The catalysed reaction is CMP + ATP = CDP + ADP. It carries out the reaction dCMP + ATP = dCDP + ADP. The protein operates within cofactor biosynthesis; (R)-pantothenate biosynthesis; (R)-pantothenate from (R)-pantoate and beta-alanine: step 1/1. Its function is as follows. Catalyzes the condensation of pantoate with beta-alanine in an ATP-dependent reaction via a pantoyl-adenylate intermediate. In terms of biological role, catalyzes the transfer of a phosphate group from ATP to either CMP or dCMP to form CDP or dCDP and ADP, respectively. The sequence is that of Bifunctional pantoate ligase/cytidylate kinase from Prochlorococcus marinus (strain AS9601).